We begin with the raw amino-acid sequence, 189 residues long: Probable nicotinate-nucleotide adenylyltransferase (189 aa).

The protein belongs to the NadD family.

It carries out the reaction nicotinate beta-D-ribonucleotide + ATP + H(+) = deamido-NAD(+) + diphosphate. It participates in cofactor biosynthesis; NAD(+) biosynthesis; deamido-NAD(+) from nicotinate D-ribonucleotide: step 1/1. Catalyzes the reversible adenylation of nicotinate mononucleotide (NaMN) to nicotinic acid adenine dinucleotide (NaAD). The sequence is that of Probable nicotinate-nucleotide adenylyltransferase from Bacillus cytotoxicus (strain DSM 22905 / CIP 110041 / 391-98 / NVH 391-98).